An 804-amino-acid chain; its full sequence is Phenylalanine--tRNA ligase beta subunit (804 aa).

In terms of domain architecture, tRNA-binding spans 39-155 (AEGLKKIVVG…ADVKPGEEVY (117 aa)). In terms of domain architecture, B5 spans 408–483 (RNPSVVKTTV…RIYGYDNLKS (76 aa)). The Mg(2+) site is built by Asp461, Asp467, Glu470, and Glu471. An FDX-ACB domain is found at 711-804 (PKFPAIERDL…LKESLKIKVR (94 aa)).

This sequence belongs to the phenylalanyl-tRNA synthetase beta subunit family. Type 1 subfamily. In terms of assembly, tetramer of two alpha and two beta subunits. The cofactor is Mg(2+).

Its subcellular location is the cytoplasm. The catalysed reaction is tRNA(Phe) + L-phenylalanine + ATP = L-phenylalanyl-tRNA(Phe) + AMP + diphosphate + H(+). In Lactobacillus johnsonii (strain CNCM I-12250 / La1 / NCC 533), this protein is Phenylalanine--tRNA ligase beta subunit.